The sequence spans 194 residues: Imidazoleglycerol-phosphate dehydratase (194 aa).

This sequence belongs to the imidazoleglycerol-phosphate dehydratase family.

It localises to the cytoplasm. The enzyme catalyses D-erythro-1-(imidazol-4-yl)glycerol 3-phosphate = 3-(imidazol-4-yl)-2-oxopropyl phosphate + H2O. Its pathway is amino-acid biosynthesis; L-histidine biosynthesis; L-histidine from 5-phospho-alpha-D-ribose 1-diphosphate: step 6/9. The sequence is that of Imidazoleglycerol-phosphate dehydratase from Listeria welshimeri serovar 6b (strain ATCC 35897 / DSM 20650 / CCUG 15529 / CIP 8149 / NCTC 11857 / SLCC 5334 / V8).